A 245-amino-acid polypeptide reads, in one-letter code: Cell division protein ZapD (245 aa).

This sequence belongs to the ZapD family. As to quaternary structure, interacts with FtsZ.

The protein resides in the cytoplasm. Functionally, cell division factor that enhances FtsZ-ring assembly. Directly interacts with FtsZ and promotes bundling of FtsZ protofilaments, with a reduction in FtsZ GTPase activity. The chain is Cell division protein ZapD from Photobacterium profundum (strain SS9).